Consider the following 59-residue polypeptide: Large ribosomal subunit protein uL30 (59 aa).

Belongs to the universal ribosomal protein uL30 family. In terms of assembly, part of the 50S ribosomal subunit.

The polypeptide is Large ribosomal subunit protein uL30 (Proteus mirabilis (strain HI4320)).